The primary structure comprises 319 residues: L-lactate dehydrogenase 2 (319 aa).

NAD(+)-binding positions include Val16, Asp37, Lys42, Tyr68, and 82 to 83 (GA). Residues Gln85 and Arg91 each contribute to the substrate site. Residues Ser104, 121–123 (AAN), and Ser146 each bind NAD(+). 123 to 126 (NPVD) provides a ligand contact to substrate. Residue 151-154 (DSAR) participates in substrate binding. Residue His178 is the Proton acceptor of the active site. Phosphotyrosine is present on Tyr222. Thr231 is a substrate binding site.

Belongs to the LDH/MDH superfamily. LDH family. Homotetramer.

It is found in the cytoplasm. It carries out the reaction (S)-lactate + NAD(+) = pyruvate + NADH + H(+). The protein operates within fermentation; pyruvate fermentation to lactate; (S)-lactate from pyruvate: step 1/1. Its function is as follows. Catalyzes the conversion of lactate to pyruvate (Potential). Contributes to S.aureus growth during nitrosative stress in both aerobically and anaerobically cultured cells, despite playing a secondary role in this resistance mechanism. The sequence is that of L-lactate dehydrogenase 2 from Staphylococcus aureus (strain Mu3 / ATCC 700698).